A 113-amino-acid polypeptide reads, in one-letter code: Hydrogenase maturation factor HypA (113 aa).

Residue His-2 participates in Ni(2+) binding. Residues Cys-73, Cys-76, Cys-89, and Cys-92 each contribute to the Zn(2+) site.

Belongs to the HypA/HybF family.

In terms of biological role, involved in the maturation of [NiFe] hydrogenases. Required for nickel insertion into the metal center of the hydrogenase. The polypeptide is Hydrogenase maturation factor HypA (Legionella pneumophila (strain Paris)).